Here is a 424-residue protein sequence, read N- to C-terminus: MFDRVEINIKAGDGGSGKVSFRREKFVPYGGPDGGDGGDGGNVYLEADSGLYSLLNFKHKRVHKASNGEGGMGSRCTGHNGADLVIKVPVGTVATILEENGQKRVLADLAADGDRTLVAHGGQGGLGNTHFVSSTNQAPMLAQKGQPGGEYDLILELKLIADVAIIGYPNVGKSSLLSLLTAAKPKVANYPFTTLSPVMGVIERPEGVFVMAEVPGLIENAHLGKGLGHDFLRHISRTRMVIHLLDGTSENPIDDMIKVNSELYLYDASLSERPQVVAINKIDDELVQLRREELKETFKEAGLEVFFISALTGEGVDVLLAKVAEKLDILKAADISETAPDHEVKIFRPAPKGKMGFRITRLEDGWQVEAPEIERIIEHSDIEDPEVRRQVMVLLKHRSVQQSLIKSGAVIGQKIITGRMEWYL.

An Obg domain is found at 1–160 (MFDRVEINIK…YDLILELKLI (160 aa)). In terms of domain architecture, OBG-type G spans 161 to 328 (ADVAIIGYPN…LLAKVAEKLD (168 aa)). GTP-binding positions include 167-174 (GYPNVGKS), 192-196 (FTTLS), 213-216 (EVPG), 280-283 (NKID), and 309-311 (SAL). Residues Ser174 and Thr194 each coordinate Mg(2+). Positions 349-424 (PAPKGKMGFR…IITGRMEWYL (76 aa)) constitute an OCT domain.

This sequence belongs to the TRAFAC class OBG-HflX-like GTPase superfamily. OBG GTPase family. Monomer. It depends on Mg(2+) as a cofactor.

It localises to the cytoplasm. An essential GTPase which binds GTP, GDP and possibly (p)ppGpp with moderate affinity, with high nucleotide exchange rates and a fairly low GTP hydrolysis rate. Plays a role in control of the cell cycle, stress response, ribosome biogenesis and in those bacteria that undergo differentiation, in morphogenesis control. This Dehalococcoides mccartyi (strain ATCC BAA-2100 / JCM 16839 / KCTC 5957 / BAV1) protein is GTPase Obg.